Consider the following 188-residue polypeptide: dCTP deaminase (188 aa).

DCTP contacts are provided by residues 111 to 116, 135 to 137, glutamine 156, tyrosine 170, and glutamine 180; these read KSTYAR and TLE. Glutamate 137 acts as the Proton donor/acceptor in catalysis.

It belongs to the dCTP deaminase family. In terms of assembly, homotrimer.

The catalysed reaction is dCTP + H2O + H(+) = dUTP + NH4(+). The protein operates within pyrimidine metabolism; dUMP biosynthesis; dUMP from dCTP (dUTP route): step 1/2. Catalyzes the deamination of dCTP to dUTP. The protein is dCTP deaminase of Pseudomonas aeruginosa (strain UCBPP-PA14).